A 238-amino-acid chain; its full sequence is Carboxymethylenebutenolidase (238 aa).

Catalysis depends on residues Cys-123, Asp-171, and His-201.

The protein belongs to the dienelactone hydrolase family. In terms of assembly, monomer.

The catalysed reaction is 2-(5-oxo-2,5-dihydrofuran-2-ylidene)acetate + H2O = 4-oxohex-2-enedioate + H(+). Its pathway is aromatic compound metabolism; 3-chlorocatechol degradation. Ring cleavage of cyclic ester dienelactone to produce maleylacetate. The chain is Carboxymethylenebutenolidase (tcbE) from Pseudomonas sp. (strain P51).